The primary structure comprises 239 residues: MTVEWLAEQLKEHNIELTETQKQQFQTYYCLLVEWNEKMNLTSITDEHDVYLKHFYDSIAPSFYFDFNQPISICDVGAGAGFPSIPLKIMFPQLKVTIVDSLNKRIQFLNHLASELQLQDVSFIHDRAETFGKGVYRESYDVVTARAVARLSVLSELCLPLVKKGGQFVALKSSKGEEELEEAKFAISVLGGNVTETHTYELPEDAGERQMFIIDKKRQTPKKYPRKPGTPNKTPLLEK.

Residues G77, F82, 128-129, and R146 contribute to the S-adenosyl-L-methionine site; that span reads AE. Residues 215–239 form a disordered region; it reads DKKRQTPKKYPRKPGTPNKTPLLEK.

It belongs to the methyltransferase superfamily. RNA methyltransferase RsmG family.

The protein localises to the cytoplasm. Functionally, specifically methylates the N7 position of guanine in position 535 of 16S rRNA. This chain is Ribosomal RNA small subunit methyltransferase G, found in Staphylococcus aureus (strain bovine RF122 / ET3-1).